Reading from the N-terminus, the 179-residue chain is ATP-dependent protease subunit HslV (179 aa).

Thr-8 is an active-site residue. Ser-164, Cys-167, and Thr-170 together coordinate Na(+).

The protein belongs to the peptidase T1B family. HslV subfamily. In terms of assembly, a double ring-shaped homohexamer of HslV is capped on each side by a ring-shaped HslU homohexamer. The assembly of the HslU/HslV complex is dependent on binding of ATP.

It localises to the cytoplasm. The enzyme catalyses ATP-dependent cleavage of peptide bonds with broad specificity.. Its activity is regulated as follows. Allosterically activated by HslU binding. Its function is as follows. Protease subunit of a proteasome-like degradation complex believed to be a general protein degrading machinery. In Staphylococcus carnosus (strain TM300), this protein is ATP-dependent protease subunit HslV.